Reading from the N-terminus, the 260-residue chain is Transmembrane protein 106C (260 aa).

Residue Gly-2 is the site of N-myristoyl glycine attachment. The helical transmembrane segment at 85 to 105 (YVLLSVLLCLLASGLVFFFLF) threads the bilayer. The N-linked (GlcNAc...) asparagine glycan is linked to Asn-184. Residues 196–216 (SYVYFYCTLPAIRVHNIVIFM) traverse the membrane as a helical segment.

This sequence belongs to the TMEM106 family. Interacts with TMEM106B.

It is found in the endoplasmic reticulum membrane. It localises to the membrane. This chain is Transmembrane protein 106C (Tmem106c), found in Mus musculus (Mouse).